Here is a 310-residue protein sequence, read N- to C-terminus: tRNA-cytidine(32) 2-sulfurtransferase (310 aa).

The short motif at 48–53 is the PP-loop motif element; sequence SGGKDS. Cys123, Cys126, and Cys214 together coordinate [4Fe-4S] cluster.

The protein belongs to the TtcA family. As to quaternary structure, homodimer. Mg(2+) serves as cofactor. [4Fe-4S] cluster is required as a cofactor.

Its subcellular location is the cytoplasm. It catalyses the reaction cytidine(32) in tRNA + S-sulfanyl-L-cysteinyl-[cysteine desulfurase] + AH2 + ATP = 2-thiocytidine(32) in tRNA + L-cysteinyl-[cysteine desulfurase] + A + AMP + diphosphate + H(+). The protein operates within tRNA modification. Functionally, catalyzes the ATP-dependent 2-thiolation of cytidine in position 32 of tRNA, to form 2-thiocytidine (s(2)C32). The sulfur atoms are provided by the cysteine/cysteine desulfurase (IscS) system. The chain is tRNA-cytidine(32) 2-sulfurtransferase from Vibrio cholerae serotype O1 (strain ATCC 39315 / El Tor Inaba N16961).